The sequence spans 284 residues: NAD kinase (284 aa).

Residue Asp60 is the Proton acceptor of the active site. Residues Asp60–Gly61, Asn134–Asp135, Arg145, Lys162, Asp164, Thr175–Ser180, and Gln234 contribute to the NAD(+) site.

This sequence belongs to the NAD kinase family. Requires a divalent metal cation as cofactor.

It is found in the cytoplasm. It carries out the reaction NAD(+) + ATP = ADP + NADP(+) + H(+). Functionally, involved in the regulation of the intracellular balance of NAD and NADP, and is a key enzyme in the biosynthesis of NADP. Catalyzes specifically the phosphorylation on 2'-hydroxyl of the adenosine moiety of NAD to yield NADP. The protein is NAD kinase of Clostridium beijerinckii (strain ATCC 51743 / NCIMB 8052) (Clostridium acetobutylicum).